A 584-amino-acid polypeptide reads, in one-letter code: Protein disulfide-isomerase-like protein of the testis (584 aa).

The N-terminal stretch at 1-20 is a signal peptide; the sequence is MDLLWMPLLLVAACVSAVHS. N-linked (GlcNAc...) asparagine glycans are attached at residues Asn-58, Asn-128, Asn-160, and Asn-340. The region spanning 388–451 is the Thioredoxin domain; sequence LVKQLVGKNF…IAKIDVTAND (64 aa). A glycan (N-linked (GlcNAc...) asparagine) is linked at Asn-540. A Prevents secretion from ER motif is present at residues 581 to 584; sequence KEEL.

The protein belongs to the protein disulfide isomerase family. Homodimer. The homodimer is not disulfide-linked. Interacts with ERO1A and CLGN. Post-translationally, N-glycosylated. In terms of tissue distribution, testis-specific.

The protein resides in the endoplasmic reticulum. In terms of biological role, probable redox-inactive chaperone involved in spermatogenesis. In Homo sapiens (Human), this protein is Protein disulfide-isomerase-like protein of the testis (PDILT).